The chain runs to 368 residues: Agmatine deiminase (368 aa).

Cys-357 acts as the Amidino-cysteine intermediate in catalysis.

This sequence belongs to the agmatine deiminase family. As to quaternary structure, homodimer.

It catalyses the reaction agmatine + H2O = N-carbamoylputrescine + NH4(+). Its pathway is amine and polyamine biosynthesis; putrescine biosynthesis via agmatine pathway; N-carbamoylputrescine from agmatine: step 1/1. Mediates the hydrolysis of agmatine into N-carbamoylputrescine in the arginine decarboxylase (ADC) pathway of putrescine biosynthesis, a basic polyamine. The chain is Agmatine deiminase from Stutzerimonas stutzeri (strain A1501) (Pseudomonas stutzeri).